Reading from the N-terminus, the 1905-residue chain is METLNGPAGGGAPDAKLQPPGQHHRHHHLHPVAERRRLHRAPSPARPFLKDLHARPAAPGPAVPSSGRAPAPAAPRSPNLAGKAPPSPGSLAAPGRLSRRSGGVPGAKDKPPPGAGARAAGGAKAALGSRRAARVAPAEPLSRAGKPPGAEPPSAAAKGRKAKRGSRAPPARTVGPPTPAARIPAVTLAVTSVAGSPARCSRISHTDSSSDLSDCPSEPLSDEQRLLPAASSDAESGTGSSDREPPRGAPTPSPAARGAPPGSPEPPALLAAPLAAGACPGGRSIPSGVSGGFAGPGVAEDVRGRSPPERPVPGTPKEPSLGEQSRLVPAAEEEELLREMEELRSENDYLKDELDELRAEMEEMRDSYLEEDVYQLQELRRELDRANKNCRILQYRLRKAEQKSLKVAETGQVDGELIRSLEQDLKVAKDVSVRLHHELKTVEEKRAKAEDENETLRQQMIEVEISKQALQNELERLKESSLKRRSTREMYKEKKTFNQDDSADLRCQLQFAKEEAFLMRKKMAKLGREKDELEQELQKYKSLYGDVDSPLPTGEAGGPPSTREAELKLRLKLVEEEANILGRKIVELEVENRGLKAEMEDMRGQQEREGPGRDHAPSIPTSPFGDSLESSTELRRHLQFVEEEAELLRRSISEIEDHNRQLTHELSKFKFEPPREPGWLGEGASPGAGGGAPLQEELKSARLQISELSGKVLKLQHENHALLSNIQRCDLAAHLGLRAPSPRDSDAESDAGKKESDGEESRLPQPKREGPVGGESDSEEMFEKTSGFGSGKPSEASEPCPTELLKAREDSEYLVTLKHEAQRLERTVERLITDTDSFLHDAGLRGGAPLPGPGLQGEEEQGEGDQQEPQLLGTINAKMKAFKKELQAFLEQVNRIGDGLSPLPHLTESSSFLSTVTSVSRDSPIGNLGKELGPDLQSRLKEQLEWQLGPARGDERESLRLRAARELHRRADGDTGSHGLGGQTCFSLEMEEEHLYALRWKELEMHSLALQNTLHERTWSDEKNLMQQELRSLKQNIFLFYVKLRWLLKHWRQGKQMEEEGEEFTEGEHPETLSRLGELGVQGGHQADGPDHDSDRGCGFPVGEHSPHSRVQIGDHSLRLQTADRGQPHKQVVENQQLFSAFKALLEDFRAELREDERARLRLQQQYASDKAAWDVEWAVLKCRLEQLEEKTENKLGELGSSAESKGALKKEREVHQKLLADSHSLVMDLRWQIHHSEKNWNREKVELLDRLDRDRQEWERQKKEFLWRIEQLQKENSPRRGGSFLCDQKDGNVRPFPHQGSLRMPRPVAMWPCADADSIPFEDRPLSKLKESDRCSASENLYLDALSLDDEPEEPPAHRPEREFRNRLPEEEENHKGNLQRAVSVSSMSEFQRLMDISPFLPEKGLPSTSSKEDVTPPLSPDDLKYIEEFNKSWDYTPNRGHNGGGPDLWADRTEVGRAGHEDSTEPFPDSSWYLTTSVTMTTDTMTSPEHCQKQPLRSHVLTEQSGLRVLHSPPAVRRVDSITAAGGEGPFPTSRARGSPGDTKGGPPEPMLSRWPCTSPRHSRDYVEGARRPLDSPLCTSLGFASPLHSLEMSKNLSDDMKEVAFSVRNAICSGPGELQVKDMACQTNGSRTMGTQTVQTISVGLQTEALRGSGVTSSPHKCLTPKAGGGATPVSSPSRSLRSRQVAPAIEKVQAKFERTCCSPKYGSPKLQRKPLPKADQPNNRTSPGMAQKGYSESAWARSTTTRESPVHTTINDGLSSLFNIIDHSPVVQDPFQKGLRAGSRSRSAEPRPELGPGQETGTNSRGRSPSPIGVGSEMCREEGGEGTPVKQDLSAPPGYTLTENVARILNKKLLEHALKEERRQAAHGPPGLHSDSHSLGDTAEPGPMENQTVLLTAPWGL.

Positions Met1–Ala249 are necessary for colocalization and binding with microtubules. A disordered region spans residues Met1–Pro329. A necessary for self-assembly, microtubule bundling activity and apicobasal microtubule organization region spans residues Met1–Gln508. Basic residues predominate over residues Gln22–Arg40. Composition is skewed to low complexity over residues Val63–Gly95 and Ala115–Arg130. Residues Ser77 and Ser87 each carry the phosphoserine modification. 3 positions are modified to phosphoserine: Ser217, Ser221, and Ser263. The span at Ala268–Arg283 shows a compositional bias: low complexity. Coiled-coil stretches lie at residues Ala330–Ser404, Ser432–Lys483, and Lys513–Glu718. 5 disordered regions span residues Tyr544–Arg563, Asp601–Ser631, Phe671–Leu694, Leu737–Cys800, and Ala842–Gln867. Phosphoserine is present on Ser549. The span at Asp601–Ala616 shows a compositional bias: basic and acidic residues. Ser618 carries the phosphoserine modification. A Phosphothreonine modification is found at Thr621. The span at Leu680–Ala692 shows a compositional bias: gly residues. Ser685 bears the Phosphoserine mark. A compositionally biased stretch (basic and acidic residues) spans Ser741–Gly770. Residue Ser776 is modified to Phosphoserine. Positions Gly857–Gln866 are enriched in acidic residues. A phosphoserine mark is found at Ser901, Ser923, Lys941, and Thr975. The disordered stretch occupies residues Gly1080–Phe1100. 2 coiled-coil regions span residues Lys1143 to Ser1201 and Glu1238 to Ser1278. Positions Glu1265–Arg1382 are necessary for interaction with MARK2 and apicobasal microtubule bundle formation in polarized epithelial cells. Ser1278 carries the phosphoserine modification. A disordered region spans residues Ala1346–Val1384. Positions Pro1356–Lys1377 are enriched in basic and acidic residues. Ser1385, Ser1388, and Ser1399 each carry phosphoserine. Position 1417 is a phosphothreonine (Thr1417). Ser1421 is modified (phosphoserine). Tyr1427 is subject to Phosphotyrosine. Positions Asp1485–Glu1505 are disordered. 7 positions are modified to phosphoserine: Ser1514, Ser1523, Ser1561, Ser1578, Ser1583, Ser1592, and Ser1661. The segment at Ile1524–Val1569 is disordered. Disordered stretches follow at residues Gly1655–Val1689, Pro1707–Thr1756, Gly1782–Gly1842, and Lys1863–Leu1905. Phosphothreonine is present on residues Thr1667 and Thr1675. A compositionally biased stretch (low complexity) spans Ser1678 to Arg1687. Positions Ser1678–Pro1773 are necessary for colocalization and binding with microtubules. Phosphoserine occurs at positions 1679 and 1683. Residues Ala1744–Thr1756 are compositionally biased toward polar residues. Residues Ser1791, Ser1808, Ser1812, and Ser1814 each carry the phosphoserine modification.

It belongs to the SOGA family. In terms of assembly, homodimer. Associates (via N- and C-terminus domains) with microtubule filaments. Interacts with MARK2; the interaction is direct. Post-translationally, phosphorylated during mitosis in a CDK1-dependent manner.

It is found in the lateral cell membrane. It localises to the apical cell membrane. The protein localises to the cytoplasm. Its subcellular location is the cytoskeleton. The protein resides in the spindle pole. It is found in the midbody. Its function is as follows. Microtubule-associated factor involved in the late phase of epithelial polarization and microtubule dynamics regulation. Plays a role in the development and maintenance of non-centrosomal microtubule bundles at the lateral membrane in polarized epithelial cells. Required for faithful chromosome segregation during mitosis. This is Microtubule cross-linking factor 1 (MTCL1) from Homo sapiens (Human).